Consider the following 305-residue polypeptide: Glutaminase (305 aa).

Residues S61, N113, E158, N165, Y189, Y241, and V259 each contribute to the substrate site.

This sequence belongs to the glutaminase family. As to quaternary structure, homotetramer.

It catalyses the reaction L-glutamine + H2O = L-glutamate + NH4(+). The chain is Glutaminase from Clostridium botulinum (strain Kyoto / Type A2).